The primary structure comprises 66 residues: MAKGKDVRAIVILECTSCVRNGVNKESPGISRYITQRNRHNTPNRLELRKFCPYCYKHTIHGEIKK.

The protein belongs to the bacterial ribosomal protein bL33 family.

The protein localises to the plastid. It localises to the chloroplast. The sequence is that of Large ribosomal subunit protein bL33c from Chloranthus spicatus (Chulantree).